Here is a 412-residue protein sequence, read N- to C-terminus: Major facilitator superfamily domain-containing protein 3 (412 aa).

The next 12 membrane-spanning stretches (helical) occupy residues 10-30 (GLYLVQGLPYGLQSGLLPVLL), 40-60 (VGLAKVLYAPWLLKLAWAPLV), 73-93 (STAGLGLVCGLLAGLPPPGAG), 94-114 (QAGLPAAVAGLLLLLNLGAAM), 138-158 (VQVVAYKLGAALAGGALLALL), 166-186 (LFLLLAATYWLAAALAWAAPA), 209-229 (VLAVPGTVWTAGFVLTYKLGE), 250-270 (LGLWNGVGAVVCSIAGSSLGG), 291-311 (LGGLACQTALVFHLDTLGASM), 321-341 (ALLSLCLQHFLGGLVTTVTFT), 361-381 (LLATLELLGKLLLGTLAGGLA), and 384-404 (LGPHPCFLLLLILSAFPVLYL).

The protein belongs to the major facilitator superfamily.

Its subcellular location is the membrane. In Homo sapiens (Human), this protein is Major facilitator superfamily domain-containing protein 3 (MFSD3).